A 459-amino-acid polypeptide reads, in one-letter code: Ribulose bisphosphate carboxylase large chain (459 aa).

At Lys4 the chain carries N6,N6,N6-trimethyllysine. Asn113 and Thr163 together coordinate substrate. The active-site Proton acceptor is the Lys165. Lys167 serves as a coordination point for substrate. Mg(2+) is bound by residues Lys191, Asp193, and Glu194. N6-carboxylysine is present on Lys191. Residue His284 is the Proton acceptor of the active site. Substrate contacts are provided by Arg285, His317, and Ser369.

Belongs to the RuBisCO large chain family. Type I subfamily. Heterohexadecamer of 8 large chains and 8 small chains; disulfide-linked. The disulfide link is formed within the large subunit homodimers. Mg(2+) is required as a cofactor. Post-translationally, the disulfide bond which can form in the large chain dimeric partners within the hexadecamer appears to be associated with oxidative stress and protein turnover.

The protein localises to the plastid. It is found in the chloroplast. It catalyses the reaction 2 (2R)-3-phosphoglycerate + 2 H(+) = D-ribulose 1,5-bisphosphate + CO2 + H2O. It carries out the reaction D-ribulose 1,5-bisphosphate + O2 = 2-phosphoglycolate + (2R)-3-phosphoglycerate + 2 H(+). Its function is as follows. RuBisCO catalyzes two reactions: the carboxylation of D-ribulose 1,5-bisphosphate, the primary event in carbon dioxide fixation, as well as the oxidative fragmentation of the pentose substrate in the photorespiration process. Both reactions occur simultaneously and in competition at the same active site. This chain is Ribulose bisphosphate carboxylase large chain, found in Parnassia fimbriata (Fringed grass-of-Parnassus).